A 263-amino-acid polypeptide reads, in one-letter code: MPFSVEVEVFFLLVEDKLGWLPTLQPVRHGSKAVTRHRRVMHFQRQKLMAITEYIPPRPAVSPRCLPPPPKPPKEESGLIRLLRRDIAAVFRDNRMIAVCQNVALSAEDKLLLRHQLRKHKIFIKVFPSQVLKPFLEDSKYQNLLPLFVGHNLLLVSEEPKVKEMVRILKSVPFLPLLGGCIDDTILSRQGFVEYAKLPSLDRLQGELVGGLTHLTAQTRYLLQHQPVQLTSLLDQYVRQQHEGDCATSTEGKPHPPDPAPDS.

The transit peptide at 1–29 directs the protein to the mitochondrion; that stretch reads MPFSVEVEVFFLLVEDKLGWLPTLQPVRH. Positions 241 to 263 are disordered; sequence QHEGDCATSTEGKPHPPDPAPDS.

This sequence belongs to the universal ribosomal protein uL10 family. In terms of assembly, component of the mitochondrial ribosome large subunit (39S) which comprises a 16S rRNA and about 50 distinct proteins.

The protein resides in the mitochondrion. The polypeptide is Large ribosomal subunit protein uL10m (Mrpl10) (Rattus norvegicus (Rat)).